A 241-amino-acid polypeptide reads, in one-letter code: Accessory protein p30II (241 aa).

2 consecutive short sequence motifs (nuclear localization signal) follow at residues 73–78 (RRCRSR) and 91–98 (GPRRSRPR). Residues 86–153 (AFPPGGPRRS…HRNSPTDTKL (68 aa)) form a disordered region. A compositionally biased stretch (low complexity) spans 107–138 (PSSTVSSSSLSFNSSSKDNSPSTNSSTSRSSG). The Mitochondrial targeting signal signature appears at 175-184 (LRVWRLCTRR).

This sequence belongs to the HTLV-1 accessory protein p30II family. As to quaternary structure, p30II binds to the KIX domains of CREBBP and EP300.

The protein resides in the host nucleus. It is found in the host nucleolus. Its subcellular location is the host mitochondrion inner membrane. P30II is a multifunctional regulator that sequesters EP300/CREBBP and down-regulates CREB-responsive element (CRE) and Tax-responsive element (TRE) mediated transcription. Specifically binds and represses tax/rex mRNA nuclear export. Since Tax and Rex are positive regulators of viral gene expression, their inhibition by p30II reduces virion production, and allows the virus to escape the host immune surveillance and persist latently in an immune-competent host. Its function is as follows. p13II increases mitochondrial permeability to monovalent cations, producing a rapid, membrane potential-dependent influx of potassium. This could involve a channel-forming activity. Interferes with cell proliferation and transformation and promotes apoptosis induced by ceramide and Fas ligand, probably using the Ras signaling. The polypeptide is Accessory protein p30II (Human T-cell leukemia virus 1 (isolate Caribbea HS-35 subtype A) (HTLV-1)).